The following is a 1103-amino-acid chain: Kinesin-like protein KIF1C (1103 aa).

Residues 5–348 (SVKVAVRVRP…LRYADRTKQI (344 aa)) form the Kinesin motor domain. 97–104 (GQTGAGKS) is an ATP binding site. Phosphoserine is present on S295. Coiled coils occupy residues 359 to 388 (NARL…SALE) and 438 to 479 (EEAM…LAEM). The segment at 400–438 (ALPAVSSPPAPVSPSSPTTHNGELEPSFSPNTESQIGPE) is disordered. Residue S494 is modified to Phosphoserine. An FHA domain is found at 523-590 (TRVGQVDMDI…LKSGNRIVMG (68 aa)). A coiled-coil region spans residues 633-674 (EQQGIDIKLEMEKRLQDLENQYRKEKEEADLLLEQQRLYADS). 2 positions are modified to phosphoserine: S674 and S676. Disordered stretches follow at residues 808 to 828 (GEEE…ARGA), 874 to 924 (LAQD…WERV), and 950 to 1103 (QGLQ…GAAV). Residues 813–822 (GGAGSGGGSE) show a composition bias toward gly residues. A coiled-coil region spans residues 828 to 872 (AEVEDLRAHIDKLTGILQEVKLQNSSKDRELQALRDRMLRMERVI). The segment covering 893-910 (PEGSEAAEEAAPSDRMPS) has biased composition (low complexity). A Phosphoserine modification is found at S915. The span at 953–962 (QGSGGRGGGL) shows a compositional bias: gly residues. Over residues 1021–1031 (PSPRRSHHPRR) the composition is skewed to basic residues. Position 1033 is a phosphoserine (S1033). The residue at position 1041 (R1041) is an Omega-N-methylarginine. Over residues 1062 to 1083 (PQPPQPYPAQRPPGPRYPPYTT) the composition is skewed to pro residues. T1083 is subject to Phosphothreonine. Position 1092 is a phosphoserine (S1092). A compositionally biased stretch (basic and acidic residues) spans 1092 to 1103 (SAPDLKESGAAV).

It belongs to the TRAFAC class myosin-kinesin ATPase superfamily. Kinesin family. Unc-104 subfamily. Monomer. Interacts with BICD2. Phosphorylated on tyrosine residues. Expressed in all tissues examined, with most abundant expression in heart and skeletal muscle.

The protein resides in the cytoplasm. The protein localises to the cytoskeleton. In terms of biological role, motor required for the retrograde transport of Golgi vesicles to the endoplasmic reticulum. Has a microtubule plus end-directed motility. The sequence is that of Kinesin-like protein KIF1C (KIF1C) from Homo sapiens (Human).